Reading from the N-terminus, the 431-residue chain is Indole diterpene prenyltransferase nodD1 (431 aa).

85 to 86 (FI) is a binding site for L-tryptophan. Residues arginine 107, lysine 194, arginine 268, lysine 270, tyrosine 272, and tyrosine 353 each contribute to the substrate site.

The protein belongs to the tryptophan dimethylallyltransferase family.

It functions in the pathway secondary metabolite biosynthesis. Indole diterpene prenyltransferase; part of the gene cluster that mediates the biosynthesis of the indole diterpenes nodulisporic acids (NA). Nodulisporic acid A (NAA) and its chemically modified derivatives are of particular significance because of their highly potent insecticidal activity against blood-feeding arthropods and lack of observable adverse effects on mammals, in particular the tremogenicity associated with the paspaline-derived IDTs is not observed. The geranylgeranyl diphosphate (GGPP) synthase ggs1, localized outside of the cluster, is proposed to catalyze the first step in nodulisporic acid biosynthesis via conversion of farnesyl pyrophosphate and isopentyl pyrophosphate into geranylgeranyl pyrophosphate (GGPP). Condensation of indole-3-glycerol phosphate with GGPP by the prenyl transferase nodC then forms 3-geranylgeranylindole (3-GGI). Epoxidation by the FAD-dependent monooxygenase nodM leads to a single-epoxidized-GGI that is substrate of the terpene cyclase nodB for cyclization to yield emindole SB. The terminal methyl carbon, C28, of emindole SB is then oxidized by the cytochrome P450 monooxygenase nodW to produce nodulisporic acid F (NAF), the pentacyclic core of NAA. NAF is converted to nodulisporic acid E (NAE) via prenylation. This step is probably performed by one of the indole diterpene prenyltransferases nodD1 or nodD2. Several oxidation steps performed by the FAD-linked oxidoreductase nodO and one of the cytochrome P450 monooxygenase nodR, nodX or nodZ further convert NAE to nodulisporic acid D (NAD). NAD is substrate of cytochrome P450 monooxygenase nodJ to produce the precursor of nodulisporic acid C (NAC), converted to NAC by one of the indole diterpene prenyltransferases nodD1 or nodD2. The FAD-dependent monooxygenase nodY2 then oxidizes NAC to nodulisporic acid B (NAB). Finally NAB is converted to NAA by one of the cytochrome P450 monooxygenases nodR, nodX or nodZ. The sequence is that of Indole diterpene prenyltransferase nodD1 from Hypoxylon pulicicidum.